The sequence spans 214 residues: Probable nicotinate-nucleotide adenylyltransferase (214 aa).

It belongs to the NadD family.

It carries out the reaction nicotinate beta-D-ribonucleotide + ATP + H(+) = deamido-NAD(+) + diphosphate. The protein operates within cofactor biosynthesis; NAD(+) biosynthesis; deamido-NAD(+) from nicotinate D-ribonucleotide: step 1/1. In terms of biological role, catalyzes the reversible adenylation of nicotinate mononucleotide (NaMN) to nicotinic acid adenine dinucleotide (NaAD). The chain is Probable nicotinate-nucleotide adenylyltransferase from Pseudomonas paraeruginosa (strain DSM 24068 / PA7) (Pseudomonas aeruginosa (strain PA7)).